A 225-amino-acid polypeptide reads, in one-letter code: Large ribosomal subunit protein bL25 (225 aa).

The disordered stretch occupies residues 188–225 (EEIEEAEAEAQATDADTATDDSEQTSEEQAEENKEDKE). Positions 204–217 (TATDDSEQTSEEQA) are enriched in acidic residues.

The protein belongs to the bacterial ribosomal protein bL25 family. CTC subfamily. Part of the 50S ribosomal subunit; part of the 5S rRNA/L5/L18/L25 subcomplex. Contacts the 5S rRNA. Binds to the 5S rRNA independently of L5 and L18.

Its function is as follows. This is one of the proteins that binds to the 5S RNA in the ribosome where it forms part of the central protuberance. The protein is Large ribosomal subunit protein bL25 of Exiguobacterium sibiricum (strain DSM 17290 / CCUG 55495 / CIP 109462 / JCM 13490 / 255-15).